The following is a 483-amino-acid chain: Aspartyl/glutamyl-tRNA(Asn/Gln) amidotransferase subunit B (483 aa).

This sequence belongs to the GatB/GatE family. GatB subfamily. As to quaternary structure, heterotrimer of A, B and C subunits.

The enzyme catalyses L-glutamyl-tRNA(Gln) + L-glutamine + ATP + H2O = L-glutaminyl-tRNA(Gln) + L-glutamate + ADP + phosphate + H(+). The catalysed reaction is L-aspartyl-tRNA(Asn) + L-glutamine + ATP + H2O = L-asparaginyl-tRNA(Asn) + L-glutamate + ADP + phosphate + 2 H(+). In terms of biological role, allows the formation of correctly charged Asn-tRNA(Asn) or Gln-tRNA(Gln) through the transamidation of misacylated Asp-tRNA(Asn) or Glu-tRNA(Gln) in organisms which lack either or both of asparaginyl-tRNA or glutaminyl-tRNA synthetases. The reaction takes place in the presence of glutamine and ATP through an activated phospho-Asp-tRNA(Asn) or phospho-Glu-tRNA(Gln). In Granulibacter bethesdensis (strain ATCC BAA-1260 / CGDNIH1), this protein is Aspartyl/glutamyl-tRNA(Asn/Gln) amidotransferase subunit B.